A 508-amino-acid chain; its full sequence is TATA box-binding protein-like 1 (508 aa).

Disordered regions lie at residues 145-190 (QISY…QMHH), 236-262 (EPIP…PMPD), and 456-479 (QKKR…FDDS).

The protein belongs to the TBP family.

The protein resides in the nucleus. In terms of biological role, may be a general transcription factor. Plays an essential role for RNA polymerase II/ama-1 transcription in early embryos whereby it activates a subset of RNA polymerase II promoters and facilitates the reestablishment of transcription after mitosis. The polypeptide is TATA box-binding protein-like 1 (Caenorhabditis elegans).